Consider the following 207-residue polypeptide: Octanoyltransferase (207 aa).

The BPL/LPL catalytic domain occupies 27–203 (ADTEDELWVV…HLETQFTPKA (177 aa)). Substrate is bound by residues 66 to 73 (RGGQITYH), 133 to 135 (SLG), and 146 to 148 (GLA). The active-site Acyl-thioester intermediate is the Cys164.

Belongs to the LipB family.

It is found in the cytoplasm. The enzyme catalyses octanoyl-[ACP] + L-lysyl-[protein] = N(6)-octanoyl-L-lysyl-[protein] + holo-[ACP] + H(+). It functions in the pathway protein modification; protein lipoylation via endogenous pathway; protein N(6)-(lipoyl)lysine from octanoyl-[acyl-carrier-protein]: step 1/2. Its function is as follows. Catalyzes the transfer of endogenously produced octanoic acid from octanoyl-acyl-carrier-protein onto the lipoyl domains of lipoate-dependent enzymes. Lipoyl-ACP can also act as a substrate although octanoyl-ACP is likely to be the physiological substrate. This is Octanoyltransferase from Neisseria meningitidis serogroup A / serotype 4A (strain DSM 15465 / Z2491).